The primary structure comprises 282 residues: Small ribosomal subunit protein uS3 (282 aa).

Residues 43–111 enclose the KH type-2 domain; that stretch reads IRRLMSKGME…QVQLNILEVK (69 aa). The interval 217–282 is disordered; it reads AQSQAAAPRA…IGKGSNGTEA (66 aa). Over residues 228–240 the composition is skewed to basic and acidic residues; it reads RRNERGDRPDRGA. The segment covering 256 to 269 has biased composition (low complexity); sequence AVATGSAPTGTAAT.

It belongs to the universal ribosomal protein uS3 family. As to quaternary structure, part of the 30S ribosomal subunit. Forms a tight complex with proteins S10 and S14.

Binds the lower part of the 30S subunit head. Binds mRNA in the 70S ribosome, positioning it for translation. In Kineococcus radiotolerans (strain ATCC BAA-149 / DSM 14245 / SRS30216), this protein is Small ribosomal subunit protein uS3.